We begin with the raw amino-acid sequence, 253 residues long: 2-succinyl-6-hydroxy-2,4-cyclohexadiene-1-carboxylate synthase (253 aa).

Residues Pro-11–Gln-147 form the AB hydrolase-1 domain.

The protein belongs to the AB hydrolase superfamily. MenH family. Monomer.

It carries out the reaction 5-enolpyruvoyl-6-hydroxy-2-succinyl-cyclohex-3-ene-1-carboxylate = (1R,6R)-6-hydroxy-2-succinyl-cyclohexa-2,4-diene-1-carboxylate + pyruvate. It participates in quinol/quinone metabolism; 1,4-dihydroxy-2-naphthoate biosynthesis; 1,4-dihydroxy-2-naphthoate from chorismate: step 3/7. The protein operates within quinol/quinone metabolism; menaquinone biosynthesis. Its function is as follows. Catalyzes a proton abstraction reaction that results in 2,5-elimination of pyruvate from 2-succinyl-5-enolpyruvyl-6-hydroxy-3-cyclohexene-1-carboxylate (SEPHCHC) and the formation of 2-succinyl-6-hydroxy-2,4-cyclohexadiene-1-carboxylate (SHCHC). This is 2-succinyl-6-hydroxy-2,4-cyclohexadiene-1-carboxylate synthase from Pectobacterium atrosepticum (strain SCRI 1043 / ATCC BAA-672) (Erwinia carotovora subsp. atroseptica).